The sequence spans 326 residues: MAISWRTWLKKTIHCDNSYVRTGLAEFLGTFLLVLLLNGMIITAHMSVRNADGTMAHPLNTAHLAFGGGLAVMVAVLVSGGISGAHLNPAVTTTMLVMGRLSPLKSLVYIFMQYMGAFFAASILYAVYFESILAYDYGERQVLGANGTAGWFATYPQEHISLVTQIFDAILGTGLLVMGIFAIIDPNNMAVPKGQIPLYVGFLISSLIFSFSYNAGAALNPARDLAPRLFLWVIGYGAEAFTARGHLWWLVPVIGPHVGGLLGGVTYQMFIGAHYQSDRKLKPATIMDEDDDTNATYNTITTTTHQKVYNGRRNFDESVPLKTVHA.

2 helical membrane passes run 24-44 (LAEF…IITA) and 64-84 (LAFG…GISG). The short motif at 88–90 (NPA) is the NPA 1 element. A helical membrane pass occupies residues 107–127 (LVYIFMQYMGAFFAASILYAV). A glycan (N-linked (GlcNAc...) asparagine) is linked at Asn-146. Helical transmembrane passes span 166-186 (IFDA…IIDP) and 196-216 (IPLY…YNAG). The short motif at 220–222 (NPA) is the NPA 2 element. The chain crosses the membrane as a helical span at residues 247-267 (LWWLVPVIGPHVGGLLGGVTY). Asn-294 carries an N-linked (GlcNAc...) asparagine glycan.

Belongs to the MIP/aquaporin (TC 1.A.8) family.

The protein localises to the cell membrane. Its function is as follows. Aquaglyceroporin that may modulate the water content and osmolytes during anhydrobiosis. In Milnesium tardigradum (Water bear), this protein is Aquaporin-3.